The chain runs to 128 residues: Large ribosomal subunit protein bL19 (128 aa).

The protein belongs to the bacterial ribosomal protein bL19 family.

In terms of biological role, this protein is located at the 30S-50S ribosomal subunit interface and may play a role in the structure and function of the aminoacyl-tRNA binding site. This is Large ribosomal subunit protein bL19 from Azoarcus sp. (strain BH72).